We begin with the raw amino-acid sequence, 61 residues long: DNA-directed RNA polymerase subunit Rpo10 (61 aa).

4 residues coordinate Zn(2+): Cys-6, Cys-9, Cys-42, and Cys-43.

This sequence belongs to the archaeal Rpo10/eukaryotic RPB10 RNA polymerase subunit family. In terms of assembly, part of the RNA polymerase complex. It depends on Zn(2+) as a cofactor.

It localises to the cytoplasm. It catalyses the reaction RNA(n) + a ribonucleoside 5'-triphosphate = RNA(n+1) + diphosphate. Its function is as follows. DNA-dependent RNA polymerase (RNAP) catalyzes the transcription of DNA into RNA using the four ribonucleoside triphosphates as substrates. The sequence is that of DNA-directed RNA polymerase subunit Rpo10 from Methanothrix thermoacetophila (strain DSM 6194 / JCM 14653 / NBRC 101360 / PT) (Methanosaeta thermophila).